Here is a 574-residue protein sequence, read N- to C-terminus: Sulfate adenylyltransferase (574 aa).

Residues 1–169 (MSNPPHGGVL…VEAINKLNHY (169 aa)) are N-terminal. The interval 170–394 (DYVALRYTPA…LRESSRPRST (225 aa)) is catalytic. Gln-197 contributes to the sulfate binding site. ATP-binding positions include 197 to 200 (QTRN) and 291 to 294 (GRDH). Active-site residues include Thr-198, Arg-199, and Asn-200. Sulfate is bound at residue Arg-199. Residue Ala-295 participates in sulfate binding. Residue Val-333 participates in ATP binding. An allosteric regulation domain; adenylyl-sulfate kinase-like region spans residues 395–574 (QGFTIFLTGY…LETEGFFDRA (180 aa)). 3'-phosphoadenylyl sulfate is bound by residues 434 to 437 (DTVR), Arg-451, 477 to 478 (IA), and Arg-516.

The protein in the N-terminal section; belongs to the sulfate adenylyltransferase family. In the C-terminal section; belongs to the APS kinase family. In terms of assembly, homohexamer. Dimer of trimers.

Its subcellular location is the cytoplasm. The catalysed reaction is sulfate + ATP + H(+) = adenosine 5'-phosphosulfate + diphosphate. It functions in the pathway sulfur metabolism; hydrogen sulfide biosynthesis; sulfite from sulfate: step 1/3. Its activity is regulated as follows. Allosterically inhibited by 3'-phosphoadenosine 5'-phosphosulfate (PAPS). In terms of biological role, catalyzes the first intracellular reaction of sulfate assimilation, forming adenosine-5'-phosphosulfate (APS) from inorganic sulfate and ATP. Plays an important role in sulfate activation as a component of the biosynthesis pathway of sulfur-containing amino acids. The polypeptide is Sulfate adenylyltransferase (Aspergillus clavatus (strain ATCC 1007 / CBS 513.65 / DSM 816 / NCTC 3887 / NRRL 1 / QM 1276 / 107)).